We begin with the raw amino-acid sequence, 232 residues long: MLTSHFPLSFAGHRLHIVDFDASSFHEHDLLWLPHHDRLRSAGRKRKAEHLAGRIAAVHALRRWASGVPGIGDKRQPLWPDDLFGSISHCASTALAVISRQRVGVDIEKIMSQHTATELAVIIDSDEPQILQASSLPFPLALTLAFSAKESVYKAFSDRVSLPGFDSAKVTSLTATHISLHLLPAFAATMAERTVRTEWFQRGNSVITLVSALTRWPHDRSAPASILSAIPR.

Asp106, Glu108, and Glu150 together coordinate Mg(2+).

It belongs to the P-Pant transferase superfamily. EntD family. As to quaternary structure, entB, EntD, EntE, and EntF form a multienzyme complex called enterobactin synthase. The cofactor is Mg(2+).

It is found in the membrane. The catalysed reaction is apo-[aryl-carrier protein] + CoA = holo-[aryl-carrier protein] + adenosine 3',5'-bisphosphate + H(+). It carries out the reaction apo-[peptidyl-carrier protein] + CoA = holo-[peptidyl-carrier protein] + adenosine 3',5'-bisphosphate + H(+). It functions in the pathway siderophore biosynthesis; enterobactin biosynthesis. Its function is as follows. Involved in the biosynthesis of the siderophore enterobactin (enterochelin), which is a macrocyclic trimeric lactone of N-(2,3-dihydroxybenzoyl)-serine. The serine trilactone serves as a scaffolding for the three catechol functionalities that provide hexadentate coordination for the tightly ligated iron(2+) atoms. Plays an essential role in the assembly of the enterobactin by catalyzing the transfer of the 4'-phosphopantetheine (Ppant) moiety from coenzyme A to the apo-domains of both EntB (ArCP domain) and EntF (PCP domain) to yield their holo-forms which make them competent for the activation of 2,3-dihydroxybenzoate (DHB) and L-serine, respectively. The chain is Enterobactin synthase component D from Salmonella austin.